The primary structure comprises 300 residues: Porphobilinogen deaminase (300 aa).

At C242 the chain carries S-(dipyrrolylmethanemethyl)cysteine.

It belongs to the HMBS family. In terms of assembly, monomer. Dipyrromethane serves as cofactor.

The catalysed reaction is 4 porphobilinogen + H2O = hydroxymethylbilane + 4 NH4(+). Its pathway is porphyrin-containing compound metabolism; protoporphyrin-IX biosynthesis; coproporphyrinogen-III from 5-aminolevulinate: step 2/4. Its function is as follows. Tetrapolymerization of the monopyrrole PBG into the hydroxymethylbilane pre-uroporphyrinogen in several discrete steps. The sequence is that of Porphobilinogen deaminase from Blochmanniella pennsylvanica (strain BPEN).